Consider the following 241-residue polypeptide: Lysoplasmalogenase TMEM86A (241 aa).

Residues 1–13 (MVSPVTVVKSEGP) are Cytoplasmic-facing. The chain crosses the membrane as a helical span at residues 14–30 (KLVPFFKATCVYFVLWL). At 31–36 (PSSSPS) the chain is on the extracellular side. Residues 37-59 (WVSALIKCLPIFCLWLFLLAHGV) form a helical membrane-spanning segment. Residues 60–67 (RFLLAHPS) are Cytoplasmic-facing. Residues 68–87 (ASLIFVGLVFSAVGDAFLIW) traverse the membrane as a helical segment. The Extracellular segment spans residues 88–96 (QDHGYFEHG). A helical transmembrane segment spans residues 97–113 (LLMFAVAHILYAAAFGM). Over 114–119 (RPLALR) the chain is Cytoplasmic. Residues 120 to 136 (TGLVIGVLSGLCYALLY) form a helical membrane-spanning segment. At 137-142 (PGLSGA) the chain is on the extracellular side. The helical transmembrane segment at 143-159 (FTYLVGVYVALISFMGW) threads the bilayer. The Cytoplasmic portion of the chain corresponds to 160-176 (RAMAGLRLVGAAWRWTE). A helical membrane pass occupies residues 177 to 195 (LAAGGGALLFILSDLTIAL). Residues 196-206 (NKFCFPVPYSR) are Extracellular-facing. The chain crosses the membrane as a helical span at residues 207–225 (ALIMSTYYAAQMLIALSAV). Over 226–241 (ESREPVGEDYRLSKAD) the chain is Cytoplasmic.

The protein belongs to the TMEM86 family. In terms of tissue distribution, highly expressed in the jejunum, white adipose tissue, kidney and macrophages.

It is found in the endoplasmic reticulum membrane. It carries out the reaction a 1-O-(1Z-alkenyl)-sn-glycero-3-phosphocholine + H2O = a 2,3-saturated aldehyde + sn-glycerol 3-phosphocholine. The catalysed reaction is a 1-O-(1Z-alkenyl)-sn-glycero-3-phosphoethanolamine + H2O = a 2,3-saturated aldehyde + sn-glycero-3-phosphoethanolamine. Functionally, catalyzes the hydrolysis of the vinyl ether bond of choline or ethanolamine lysoplasmalogens, forming fatty aldehyde and glycerophosphocholine or glycerophosphoethanolamine, respectively and is specific for the sn-2-deacylated (lyso) form of plasmalogen. Plays an important role in lysoplasmalogen metabolism in the adipocyte tissue and macrophages. This Mus musculus (Mouse) protein is Lysoplasmalogenase TMEM86A (Tmem86a).